The chain runs to 383 residues: uncharacterized protein (383 aa).

This sequence belongs to the peptidase M20 family.

This is an uncharacterized protein from Staphylococcus haemolyticus (strain JCSC1435).